Here is a 251-residue protein sequence, read N- to C-terminus: Uridylate kinase (251 aa).

19 to 22 lines the ATP pocket; sequence KLSG. Residue Gly-61 coordinates UMP. Residues Gly-62 and Arg-66 each coordinate ATP. UMP-binding positions include Asp-81 and 142–149; that span reads IGNPFFTT. Residues Thr-169, Gln-170, Tyr-175, and Asp-178 each contribute to the ATP site.

It belongs to the UMP kinase family. In terms of assembly, homohexamer.

The protein resides in the cytoplasm. It carries out the reaction UMP + ATP = UDP + ADP. It participates in pyrimidine metabolism; CTP biosynthesis via de novo pathway; UDP from UMP (UMPK route): step 1/1. Inhibited by UTP. Catalyzes the reversible phosphorylation of UMP to UDP. In Hyphomonas neptunium (strain ATCC 15444), this protein is Uridylate kinase.